Here is a 612-residue protein sequence, read N- to C-terminus: Adherence factor (612 aa).

6 stretches are compositionally biased toward low complexity: residues 1–18 (MSSF…NLSS), 47–68 (SSMM…QQQQ), 94–106 (LQTQ…SATT), 115–141 (YNQQ…NNMQ), 182–203 (QSAQ…QPRS), and 218–228 (SRQVSGSGRST). Disordered regions lie at residues 1 to 20 (MSSF…SSFQ), 46 to 68 (ASSM…QQQQ), 94 to 143 (LQTQ…MQFF), 179 to 273 (PQLQ…NNNK), 443 to 480 (KEKK…NTNN), 497 to 527 (SQLM…LSNN), and 546 to 612 (SQEQ…KQFY). A compositionally biased stretch (polar residues) spans 230-240 (AKKQSAITSGS). A compositionally biased stretch (low complexity) spans 254–272 (TSVANSTSTTTMTTTNNNN). The segment covering 443–457 (KEKKLTEKTIEQREQ) has biased composition (basic and acidic residues). Polar residues-rich tracts occupy residues 465 to 480 (ANHS…NTNN) and 497 to 512 (SQLM…ATKI). The span at 555–571 (NQHHHNHQQHPLIHHHQ) shows a compositional bias: basic residues. Low complexity predominate over residues 585 to 606 (PSTIPTSSLSIQQQQQQQQQQL).

Surface antigen mediating adhesion and aggregation in S.cerevisiae. In Candida albicans (strain SC5314 / ATCC MYA-2876) (Yeast), this protein is Adherence factor (ADF1).